Reading from the N-terminus, the 245-residue chain is Ribonuclease 3 (245 aa).

The RNase III domain occupies 24-146 (YAVFLQKLGY…IIGAIYLESG (123 aa)). A Mg(2+)-binding site is contributed by glutamate 59. Residue aspartate 63 is part of the active site. Residues asparagine 132 and glutamate 135 each coordinate Mg(2+). Residue glutamate 135 is part of the active site. Positions 173–243 (DSKTLLQEYL…ARQAYELAIV (71 aa)) constitute a DRBM domain.

Belongs to the ribonuclease III family. Homodimer. It depends on Mg(2+) as a cofactor.

The protein resides in the cytoplasm. It carries out the reaction Endonucleolytic cleavage to 5'-phosphomonoester.. Functionally, digests double-stranded RNA. Involved in the processing of primary rRNA transcript to yield the immediate precursors to the large and small rRNAs (23S and 16S). Processes some mRNAs, and tRNAs when they are encoded in the rRNA operon. Processes pre-crRNA and tracrRNA of type II CRISPR loci if present in the organism. The polypeptide is Ribonuclease 3 (Nitrosomonas europaea (strain ATCC 19718 / CIP 103999 / KCTC 2705 / NBRC 14298)).